A 334-amino-acid polypeptide reads, in one-letter code: Syntaxin-18 (334 aa).

Residues M1–N308 lie on the Cytoplasmic side of the membrane. 2 disordered regions span residues G29 to S50 and L166 to E225. Composition is skewed to basic and acidic residues over residues G33 to S50 and L166 to S182. Residues E183–D192 show a composition bias toward polar residues. The segment covering S193 to L207 has biased composition (basic and acidic residues). Residues I242–A304 enclose the t-SNARE coiled-coil homology domain. A helical; Anchor for type IV membrane protein transmembrane segment spans residues A309–L329. Residues D330–S334 are Lumenal-facing.

Belongs to the syntaxin family. Component of a SNARE complex consisting of STX18, USE1L, BNIP1/SEC20L, and SEC22B. RINT1/TIP20L and ZW10 are associated with the complex through interaction with BNIP1/SEC20L. Interacts directly with USE1L and BNIP1/SEC20L.

The protein resides in the endoplasmic reticulum membrane. It localises to the golgi apparatus membrane. Its function is as follows. Syntaxin that may be involved in targeting and fusion of Golgi-derived retrograde transport vesicles with the ER. The chain is Syntaxin-18 (Stx18) from Mus musculus (Mouse).